The following is a 700-amino-acid chain: Calpain-2 catalytic subunit (700 aa).

Ala2 is modified (N-acetylalanine). Residues 2–19 constitute a propeptide, anchors to the small subunit; the sequence is AGIAMKLAKDREAAEGLG. In terms of domain architecture, Calpain catalytic spans 45–344; it reads LFQDPSFPAL…YSRLEICNLT (300 aa). The Ca(2+) site is built by Ile89, Gly91, and Asp96. Cys105 is a catalytic residue. The Ca(2+) site is built by Glu175, Gln229, and Lys230. Residues His262 and Asn286 contribute to the active site. Ca(2+)-binding residues include Glu292, Asp299, Gln319, and Glu323. The domain III stretch occupies residues 345–514; that stretch reads PDTLTCDSYK…KKADYQTVDD (170 aa). The linker stretch occupies residues 515-529; that stretch reads EIEANIEEIEANEED. The domain IV stretch occupies residues 530 to 700; the sequence is IGDGFRRLFA…LISWLSFSVL (171 aa). Ca(2+) is bound by residues Ala542, Asp545, Glu547, Glu552, Asp585, Asp587, Ser589, Lys591, Glu596, Asp615, Asp617, Ser619, Thr621, Glu626, Asp658, and Asn661. 2 EF-hand domains span residues 572–605 and 602–637; these read FSIETCKIMVDMLDEDGSGKLGLKEFYILWTKIQ and TKIQKYQKIYREIDVDRSGTMNSYEMRKALEEAGFK. The 34-residue stretch at 667 to 700 folds into the EF-hand 3 domain; the sequence is VRLEILFKIFKQLDPENTGTIQLDLISWLSFSVL.

This sequence belongs to the peptidase C2 family. As to quaternary structure, forms a heterodimer with a small (regulatory) subunit (CAPNS1). Interacts with CPEB3; this leads to cleavage of CPEB3. Ca(2+) is required as a cofactor. As to expression, ubiquitous.

Its subcellular location is the cytoplasm. It is found in the cell membrane. It carries out the reaction Broad endopeptidase specificity.. Activated by 200-1000 micromolar concentrations of calcium and inhibited by calpastatin. In terms of biological role, calcium-regulated non-lysosomal thiol-protease which catalyze limited proteolysis of substrates involved in cytoskeletal remodeling and signal transduction. Proteolytically cleaves MYOC at 'Arg-226'. Proteolytically cleaves CPEB3 following neuronal stimulation which abolishes CPEB3 translational repressor activity, leading to translation of CPEB3 target mRNAs. This Rattus norvegicus (Rat) protein is Calpain-2 catalytic subunit (Capn2).